The chain runs to 874 residues: Breast cancer anti-estrogen resistance protein 1 (874 aa).

An N-acetylmethionine modification is found at M1. In terms of domain architecture, SH3 spans 3 to 65; the sequence is VPNVLAKALY…PGNRLKILVG (63 aa). Positions 71–177 are disordered; that stretch reads PVGPGPGPPA…LYQVPPGPGS (107 aa). The span at 73 to 88 shows a compositional bias: pro residues; that stretch reads GPGPGPPATPPQPQPS. The segment at 119 to 420 is substrate for kinases; that stretch reads YLVPTPSKTQ…DGVYAVPPPA (302 aa). Y132 is subject to Phosphotyrosine. Residues 139–155 are compositionally biased toward polar residues; that stretch reads PQFQSPPAKQTSTFSKQ. A Phosphoserine modification is found at S143. Phosphotyrosine occurs at positions 238 and 253. T273 is modified (phosphothreonine). The residue at position 296 (S296) is a Phosphoserine. Phosphotyrosine is present on residues Y366, Y376, and Y414. Low complexity predominate over residues 374 to 388; sequence DLYDVPPGLRRPGPG. Disordered stretches follow at residues 374–394, 409–450, and 610–662; these read DLYD…YDVP, VDDG…SLEV, and RRTK…NSEG. The span at 420-430 shows a compositional bias: basic and acidic residues; it reads AEREAPTDGKR. The segment covering 431 to 448 has biased composition (low complexity); sequence LSASSTGSTRSSQSASSL. S432, S441, and S643 each carry phosphoserine. Residues 621–659 are compositionally biased toward polar residues; the sequence is GSSSLHPNPTDKASSIQSRPLPSPPKFTSQDSPDGQYEN. Positions 639–647 match the SH3-binding motif; that stretch reads RPLPSPPKF. The interval 750–800 is divergent helix-loop-helix motif; it reads FYLEQCEANLTTLTDAVDAFFTAVATNQPPKIFVAHSKFVILSAHKLVFIG.

Belongs to the CAS family. As to quaternary structure, forms complexes in vivo with PTK2/FAK1, adapter protein CRKL and LYN kinase. Can heterodimerize with NEDD9. Component of a complex comprised of SH2D3C, BCAR1/CAS, and CRK. Within the complex, interacts with SH2D3C (via C-terminus), and CRK. Part of a complex comprised of PTPRA, BCAR1, BCAR3 (via SH2 domain) and SRC; the formation of the complex is dependent on integrin mediated-tyrosine phosphorylation of PTPRA. Interacts with BCAR3 (via Ras-GEF domain); the interaction regulates adhesion-dependent serine phosphorylation. Interacts with SMAD2 and SMAD3. Interacts with NPHP1. Interacts with PTK2B/PYK2. Interacts (via C-terminus) with SH2D3C/CHAT isoform 2 (via C-terminus). Interacts with activated CSPG4. Interacts with BMX, INPPL1/SHIP2 and PEAK1. Part of a collagen stimulated complex involved in cell migration composed of CDC42, CRK, TNK2 and BCAR1/p130cas. Interacts with TNK2 via SH3 domains. Interacts (when tyrosine-phosphorylated) with tensin TNS1; the interaction is increased by phosphorylation of TNS1. PTK2/FAK1 activation mediates phosphorylation at the YDYVHL motif; phosphorylation is most likely catalyzed by SRC family members. SRC-family kinases are recruited to the phosphorylated sites and can phosphorylate other tyrosine residues. Tyrosine phosphorylation is triggered by integrin mediated adhesion of cells to the extracellular matrix. In terms of processing, dephosphorylated by PTPN14 at Tyr-132. Post-translationally, phosphorylated by SRC kinase in a EDN1- and PTK2B-mediated manner; phosphorylation strengthens its interaction with BCAR3 as part of the PTK2B/BCAR1/BCAR3/RAP1 signaling pathway. As to expression, expressed in olfactory sensory neurons (at protein level). Expressed abundantly in the liver, lung, brain, and at lower levels in the heart (at protein level).

The protein localises to the cell junction. It localises to the focal adhesion. Its subcellular location is the cytoplasm. It is found in the cell projection. The protein resides in the axon. Its function is as follows. Docking protein which plays a central coordinating role for tyrosine kinase-based signaling related to cell adhesion. Implicated in induction of cell migration and cell branching. Involved in the BCAR3-mediated inhibition of TGFB signaling. The chain is Breast cancer anti-estrogen resistance protein 1 (Bcar1) from Mus musculus (Mouse).